We begin with the raw amino-acid sequence, 541 residues long: Membrane protein insertase YidC (541 aa).

5 helical membrane-spanning segments follow: residues 7–27, 346–368, 416–436, 454–474, and 495–515; these read LLVIALLFISFLVYQQWQLDY, IVQNWGLAIIGVTLVVKAILYPL, LGGCLPILLQMPIFIALYWTF, LSAQDPYYILPILMGASMFLL, and PLIFMVFFLWFPSGLVLYWLV.

Belongs to the OXA1/ALB3/YidC family. Type 1 subfamily. In terms of assembly, interacts with the Sec translocase complex via SecD. Specifically interacts with transmembrane segments of nascent integral membrane proteins during membrane integration.

It localises to the cell inner membrane. In terms of biological role, required for the insertion and/or proper folding and/or complex formation of integral membrane proteins into the membrane. Involved in integration of membrane proteins that insert both dependently and independently of the Sec translocase complex, as well as at least some lipoproteins. Aids folding of multispanning membrane proteins. This chain is Membrane protein insertase YidC, found in Pasteurella multocida (strain Pm70).